Reading from the N-terminus, the 119-residue chain is Large ribosomal subunit protein uL22c (119 aa).

This sequence belongs to the universal ribosomal protein uL22 family. Part of the 50S ribosomal subunit.

It is found in the plastid. The protein resides in the chloroplast. Functionally, this protein binds specifically to 23S rRNA. Its function is as follows. The globular domain of the protein is located near the polypeptide exit tunnel on the outside of the subunit, while an extended beta-hairpin is found that lines the wall of the exit tunnel in the center of the 70S ribosome. This chain is Large ribosomal subunit protein uL22c (rpl22), found in Mesostigma viride (Green alga).